Consider the following 440-residue polypeptide: Xaa-Pro dipeptidase (440 aa).

Residues aspartate 244, aspartate 255, histidine 335, glutamate 380, and glutamate 419 each coordinate Mn(2+).

It belongs to the peptidase M24B family. Bacterial-type prolidase subfamily. Mn(2+) serves as cofactor.

The catalysed reaction is Xaa-L-Pro dipeptide + H2O = an L-alpha-amino acid + L-proline. Its function is as follows. Splits dipeptides with a prolyl residue in the C-terminal position. The chain is Xaa-Pro dipeptidase from Shewanella halifaxensis (strain HAW-EB4).